The primary structure comprises 529 residues: MTLSPYLQEVAKRRTFAIISHPDAGKTTITEKVLLFGQAIQTAGTVKGRGSNQHAKSDWMEMEKQRGISITTSVMQFPYHDCLVNLLDTPGHEDFSEDTYRTLTAVDCCLMVIDAAKGVEDRTRKLMEVTRLRDTPILTFMNKLDRDIRDPMELLDEVENELKIGCAPITWPIGCGKLFKGVYHLYKDETYLYQSGKGHTIQEVRIVKGLNNPDLDAAVGEDLAQQLRDELELVKGASNEFDKELFLAGEITPVFFGTALGNFGVDHMLDGLVEWAPAPMPRQTDTRTVQASEDKFTGFVFKIQANMDPKHRDRVAFMRVVSGKYEKGMKLRQVRTAKDVVISDALTFMAGDRSHVEEAYPGDILGLHNHGTIQIGDTFTQGEMMKFTGIPNFAPELFRRIRLKDPLKQKQLLKGLVQLSEEGAVQVFRPISNNDLIVGAVGVLQFDVVVSRLKSEYNVEAVYESVNVATARWVECADAKKFEEFKRKNESQLALDGGDNLAYIATSMVNLRLAQERYPDVQFHQTREH.

In terms of domain architecture, tr-type G spans Ala11–Met280. GTP is bound by residues Ser20–Thr27, Asp88–His92, and Asn142–Asp145.

This sequence belongs to the TRAFAC class translation factor GTPase superfamily. Classic translation factor GTPase family. PrfC subfamily.

Its subcellular location is the cytoplasm. Its function is as follows. Increases the formation of ribosomal termination complexes and stimulates activities of RF-1 and RF-2. It binds guanine nucleotides and has strong preference for UGA stop codons. It may interact directly with the ribosome. The stimulation of RF-1 and RF-2 is significantly reduced by GTP and GDP, but not by GMP. The sequence is that of Peptide chain release factor 3 from Escherichia coli O8 (strain IAI1).